The primary structure comprises 407 residues: MASKGREGEHPSVTLFRQYLRIRTVQPEPDYGAAVAFLEERARQLGLGCQKVEVVPGHVVTVLTWPGTNPTLSSILLNSHTDVVPVFKEHWSHDPFEGFKDADGYIYGRGAQDMKCVSIQYLEAVRRLKVEGHHFPRTIHMTFVPDEEVGGHQGMELFVKRPEFQALRAGFALDEGLASPTDAFTVFYSERSPWWLRVTSTGKPGHGSRFIEDTAAEKLHKVINSILAFREKEKQRLQSNQLKPGAVTSVNLTMLEGGVAYNVVPATMSACFDFRVAPDVDLKAFEEQLQSWCQAAGEGVTFEFVQKWMETQVTSTDDSDPWWAAFSGVFKDMKLALELEICPASTDARYIRAAGVPALGFSPMNHTPVLLHDHDERLHEAVFLRGVDIYTQLLSALASVPALPSES.

Ala2 is modified (N-acetylalanine). His80 contacts Zn(2+). Asp82 is a catalytic residue. Residue Asp113 coordinates Zn(2+). Residue Glu147 is the Proton acceptor of the active site. Zn(2+) contacts are provided by Glu148, Glu175, and His372.

Belongs to the peptidase M20A family. As to quaternary structure, homodimer. Interacts with SPHK1. The cofactor is Zn(2+).

The protein localises to the cytoplasm. It carries out the reaction an N-acyl-L-amino acid + H2O = an L-alpha-amino acid + a carboxylate. The enzyme catalyses N-acetyl-L-methionine + H2O = L-methionine + acetate. It catalyses the reaction N-acetyl-L-glutamine + H2O = L-glutamine + acetate. Catalyzes the hydrolysis of N-acetylated amino acids to acetate and free amino acids. In Sus scrofa (Pig), this protein is Aminoacylase-1 (ACY1).